A 478-amino-acid polypeptide reads, in one-letter code: DNA gyrase subunit B (478 aa).

The Toprim domain occupies 319–438 (CEIYLVEGDS…GGHVYIAQPP (120 aa)). Mg(2+) contacts are provided by Glu-325, Asp-403, and Asp-405.

The protein belongs to the type II topoisomerase GyrB family. As to quaternary structure, heterotetramer, composed of two GyrA and two GyrB chains. In the heterotetramer, GyrA contains the active site tyrosine that forms a transient covalent intermediate with DNA, while GyrB binds cofactors and catalyzes ATP hydrolysis. The cofactor is Mg(2+). Requires Mn(2+) as cofactor. Ca(2+) serves as cofactor.

The protein resides in the cytoplasm. The enzyme catalyses ATP-dependent breakage, passage and rejoining of double-stranded DNA.. A type II topoisomerase that negatively supercoils closed circular double-stranded (ds) DNA in an ATP-dependent manner to modulate DNA topology and maintain chromosomes in an underwound state. Negative supercoiling favors strand separation, and DNA replication, transcription, recombination and repair, all of which involve strand separation. Also able to catalyze the interconversion of other topological isomers of dsDNA rings, including catenanes and knotted rings. Type II topoisomerases break and join 2 DNA strands simultaneously in an ATP-dependent manner. The chain is DNA gyrase subunit B (gyrB) from Cytophaga aurantiaca.